The chain runs to 378 residues: uncharacterized protein (378 aa).

The segment covering 1-11 has biased composition (polar residues); sequence MSQQTTPAEQK. The disordered stretch occupies residues 1 to 33; that stretch reads MSQQTTPAEQKSLQRKKPPFRADQVGSLLRSEP.

This sequence to B.subtilis YxjH.

This is an uncharacterized protein from Bacillus subtilis (strain 168).